A 180-amino-acid chain; its full sequence is Mitochondrial inner membrane protease subunit 2 (180 aa).

A helical membrane pass occupies residues 19-39 (LVGITLWVPVLMFVEQHVVSV). Residues S46 and K92 contribute to the active site.

Belongs to the peptidase S26 family. IMP2 subfamily. Heterodimer of 2 subunits, imp1 and imp2.

The protein localises to the mitochondrion inner membrane. Functionally, catalyzes the removal of transit peptides required for the targeting of proteins from the mitochondrial matrix, across the inner membrane, into the inter-membrane space. This Schizosaccharomyces pombe (strain 972 / ATCC 24843) (Fission yeast) protein is Mitochondrial inner membrane protease subunit 2.